The primary structure comprises 353 residues: uncharacterized protein (353 aa).

The first 24 residues, 1–24 (MRVVKRIAVACYLGITIFSGIAFG), serve as a signal peptide directing secretion.

This sequence belongs to the chlamydial CPn_1058/CT_355/TC_0634 family.

This is an uncharacterized protein from Chlamydia muridarum (strain MoPn / Nigg).